Here is a 400-residue protein sequence, read N- to C-terminus: 3-phenylpropionate/cinnamic acid dioxygenase ferredoxin--NAD(+) reductase component (400 aa).

An FAD-binding site is contributed by 5 to 36; the sequence is TIIIVGGGQAAAMAAASLRQQGFTGELHLFSD. NAD(+) is bound at residue 146-174; it reads SVVIVGAGTIGLELAASATQRRCKVTVIE.

Belongs to the bacterial ring-hydroxylating dioxygenase ferredoxin reductase family. As to quaternary structure, this dioxygenase system consists of four proteins: the two subunits of the hydroxylase component (HcaE and HcaF), a ferredoxin (HcaC) and a ferredoxin reductase (HcaD). The cofactor is FAD.

The enzyme catalyses 2 reduced [2Fe-2S]-[ferredoxin] + NAD(+) + H(+) = 2 oxidized [2Fe-2S]-[ferredoxin] + NADH. Its pathway is aromatic compound metabolism; 3-phenylpropanoate degradation. In terms of biological role, part of the multicomponent 3-phenylpropionate dioxygenase, that converts 3-phenylpropionic acid (PP) and cinnamic acid (CI) into 3-phenylpropionate-dihydrodiol (PP-dihydrodiol) and cinnamic acid-dihydrodiol (CI-dihydrodiol), respectively. This is 3-phenylpropionate/cinnamic acid dioxygenase ferredoxin--NAD(+) reductase component from Escherichia coli (strain 55989 / EAEC).